A 959-amino-acid polypeptide reads, in one-letter code: Glutamate receptor 3.4 (959 aa).

Positions 1 to 35 are cleaved as a signal peptide; sequence MGFLVMIREVSMAKAIRVVLLCVSVLWVVPKECAC. The Extracellular portion of the chain corresponds to 36 to 613; sequence RSNFSRNSSS…SPWSFLKPFT (578 aa). N-linked (GlcNAc...) asparagine glycans are attached at residues Asn38, Asn42, Asn108, Asn365, Asn378, Asn404, Asn443, Asn461, and Asn576. The helical transmembrane segment at 614–634 threads the bilayer; that stretch reads IEMWAVTGGFFLFVGAMVWIL. Residues 635 to 643 are Cytoplasmic-facing; it reads EHRFNQEFR. The chain crosses the membrane as a helical span at residues 644–664; the sequence is GPPRRQLITIFWFSFSTMFFS. Residues 665–675 are Cytoplasmic-facing; it reads HRENTVSSLGR. The helical transmembrane segment at 676–696 threads the bilayer; the sequence is FVLIIWLFVVLIINSSYTASL. The Extracellular segment spans residues 697–857; sequence TSILTIRQLT…SEDSQLSLKS (161 aa). A helical transmembrane segment spans residues 858-878; sequence FWGLFLICGITCFMALTVFFW. Topologically, residues 879-959 are cytoplasmic; it reads RVFWQYQRLL…TSQSQHGEIT (81 aa). 2 disordered regions span residues 893–913 and 936–959; these read DEER…SRAP and KSSK…GEIT. Positions 943–959 are enriched in low complexity; it reads STQSAAGTSQSQHGEIT.

Belongs to the glutamate-gated ion channel (TC 1.A.10.1) family. As to quaternary structure, forms a heteromeric channel with GLR3.2. In terms of tissue distribution, highly expressed in roots and at lower levels in leaves and siliques. Expressed in seedlings, cotyledons, roots (e.g. root hairs, epidermis and cortex cells), stems, leaves (e.g. vascular bundles and hydathodes), and siliques. Expressed in root phloem.

It localises to the cell membrane. The protein resides in the plastid. The protein localises to the chloroplast membrane. Its function is as follows. Glutamate-gated receptor that probably acts as a non-selective cation channel, at least in hypocotyls. Can be triggered by Asn, Ser, Gly and, to a lower extent, Ala, Cys and Glu. May be involved in light-signal transduction and calcium homeostasis via the regulation of calcium influx into cells. Plays an important role in the calcium-based fast transmission of environmental stress. Acts as a negative regulator of lateral root initiation and development. May restrict primordia numbers and position along the root axis by a signaling process originating in the phloem. AtGLR3.4-mediated cytosolic calcium influx may be involved in the regulation of seed germination under salt stress by modulating sodium accumulation through the SOS pathway. In Arabidopsis thaliana (Mouse-ear cress), this protein is Glutamate receptor 3.4.